The chain runs to 336 residues: Potassium channel subfamily K member 1 (336 aa).

At 1–20 (MLQSLAGSSCVRLVERHRSA) the chain is on the cytoplasmic side. The chain crosses the membrane as a helical span at residues 21-41 (WCFGLLVLGYLLYLVFGAVVF). At 42–103 (SSVELPYEDL…SNASGNWNWD (62 aa)) the chain is on the extracellular side. Asn-95 carries N-linked (GlcNAc...) asparagine glycosylation. An intramembrane region (helical) is located at residues 104-116 (FTSALFFASTVLS). An intramembrane segment occupies 117–122 (TTGYGH). The segment at 117-122 (TTGYGH) is selectivity filter 1. At 123–132 (TVPLSDGGKA) the chain is on the extracellular side. Residues 133–156 (FCIIYSVIGIPFTLLFLTAVVQRI) form a helical membrane-spanning segment. Topologically, residues 157-181 (TVHVTRRPVLYFHIRWGFSKQMVGI) are cytoplasmic. Residues 182–202 (VHAVVLGFVTVSCFFFIPAAV) traverse the membrane as a helical segment. Topologically, residues 203-211 (FSVLEDDWN) are extracellular. Positions 212–224 (FLESFYFCFISLS) form an intramembrane region, helical. The tract at residues 225–230 (TIGLGD) is selectivity filter 2. Residues 225-231 (TIGLGDY) lie within the membrane without spanning it. The Extracellular portion of the chain corresponds to 232-243 (VPGEGYNQKFRE). Residues 244-267 (LYKIGITCYLLLGLIAMLVVLETF) form a helical membrane-spanning segment. Over 268–336 (CELHELKKFR…SAYAEDSASH (69 aa)) the chain is Cytoplasmic. A Glycyl lysine isopeptide (Lys-Gly) (interchain with G-Cter in SUMO) cross-link involves residue Lys-274. Residues 293–299 (IVEHDQL) are important for intracellular retention in recycling endosomes.

It belongs to the two pore domain potassium channel (TC 1.A.1.8) family. Homodimer; disulfide-linked. Heterodimer with KCNK2; disulfide-linked. In astrocytes, forms mostly heterodimeric potassium channels with KCNK2, with only a minor proportion of functional channels containing homodimeric KCNK1. Interacts with KCNK3 and KCNK9, forming functional heterodimeric channels. Interacts with GNG4. Identified in a complex with PSD and ARF6; interacts only with PSD that is bound to ARF6. Interacts with UBE2I. Post-translationally, sumoylation is controversial. Sumoylated by UBE2I. Not sumoylated when expressed in xenopus oocytes or mammalian cells. Sumoylation inactivates the channel, but does not interfere with expression at the cell membrane. Sumoylation of a single subunit is sufficient to silence the dimeric channel. Sumoylation of KCNK1 is sufficient to silence heterodimeric channels formed by KCNK1 and KCNK3 or KCNK9. Desumoylated by SENP1; this activates the channel. Desumoylated by SENP1; this strongly increases halothane-mediated activation of heterodimeric channels formed with KCNK9. SENP1 treatment has no effect.

Its subcellular location is the cell membrane. The protein resides in the recycling endosome. It localises to the synaptic cell membrane. It is found in the cytoplasmic vesicle. The protein localises to the perikaryon. Its subcellular location is the cell projection. The protein resides in the dendrite. It localises to the apical cell membrane. The catalysed reaction is K(+)(in) = K(+)(out). It carries out the reaction NH4(+)(in) = NH4(+)(out). It catalyses the reaction Na(+)(in) = Na(+)(out). The enzyme catalyses Rb(+)(in) = Rb(+)(out). The catalysed reaction is Cs(+)(in) = Cs(+)(out). It carries out the reaction Li(+)(in) = Li(+)(out). It catalyses the reaction L-glutamate(out) = L-glutamate(in). The enzyme catalyses chloride(in) = chloride(out). In terms of biological role, ion channel that contributes to passive transmembrane potassium transport and to the regulation of the resting membrane potential in brain astrocytes, but also in kidney and in other tissues. Forms dimeric channels through which potassium ions pass in accordance with their electrochemical gradient. The channel is selective for K(+) ions at physiological potassium concentrations and at neutral pH, but becomes permeable to Na(+) at subphysiological K(+) levels and upon acidification of the extracellular medium. The homodimer has very low potassium channel activity, when expressed in heterologous systems, and can function as weakly inward rectifying potassium channel. Channel activity is modulated by activation of serotonin receptors. Heterodimeric channels containing KCNK1 and KCNK2 have much higher activity, and may represent the predominant form in astrocytes. Heterodimeric channels containing KCNK1 and KCNK3 or KCNK9 have much higher activity. Heterodimeric channels formed by KCNK1 and KCNK9 may contribute to halothane-sensitive currents. Mediates outward rectifying potassium currents in dentate gyrus granule cells and contributes to the regulation of their resting membrane potential. Contributes to the regulation of action potential firing in dentate gyrus granule cells and down-regulates their intrinsic excitability. In astrocytes, the heterodimer formed by KCNK1 and KCNK2 is required for rapid glutamate release in response to activation of G-protein coupled receptors, such as F2R and CNR1. Required for normal ion and water transport in the kidney. Contributes to the regulation of the resting membrane potential of pancreatic beta cells. The low channel activity of homodimeric KCNK1 may be due to sumoylation. The low channel activity may be due to rapid internalization from the cell membrane and retention in recycling endosomes. Permeable to monovalent cations with ion selectivity for K(+) &gt; Rb(+) &gt;&gt; NH4(+) &gt;&gt; Cs(+) = Na(+) = Li(+). This is Potassium channel subfamily K member 1 from Cavia porcellus (Guinea pig).